Reading from the N-terminus, the 145-residue chain is Brain and acute leukemia cytoplasmic protein (145 aa).

G2 carries N-myristoyl glycine lipidation. C3 is lipidated: S-palmitoyl cysteine. The interval 3–35 (CGGSRADAIEPRYYESWTRETESTWLTYTDSDA) is interaction with CAMK2A. Residues 27–119 (WLTYTDSDAP…AKRDAKRMPA (93 aa)) are disordered. Low complexity predominate over residues 32-46 (DSDAPPSAAAPDSGP). Residues 83–108 (CETQCPNPQSLSSGPLTQKQNGLQTT) are compositionally biased toward polar residues. Over residues 109-119 (EAKRDAKRMPA) the composition is skewed to basic and acidic residues.

Interacts with CAMK2A. Palmitoylation and myristoylation target the protein to the lipid rafts. As to expression, predominantly expressed in neuroectoderm-derived tissues. Expressed in the brain and spinal cord, and at low levels, in the adrenal gland. In the bone marrow, confined to the CD34+ progenitor cells. Not found in peripheral blood mononuclear cells, nor lymph nodes. Tends to be expressed at high levels in acute myeloid leukemia and glioblastoma cells.

It is found in the cytoplasm. The protein resides in the synapse. The protein localises to the synaptosome. Its subcellular location is the membrane raft. It localises to the postsynaptic density. Functionally, may play a synaptic role at the postsynaptic lipid rafts possibly through interaction with CAMK2A. This chain is Brain and acute leukemia cytoplasmic protein, found in Homo sapiens (Human).